The following is an 807-amino-acid chain: Putative histidine biosynthesis bifunctional protein HisCD (807 aa).

Positions 1-440 (MTDHFDTLIR…ALNIAGQGVN (440 aa)) are histidinol dehydrogenase. Residues Q261 and H264 each coordinate Zn(2+). Active-site residues include E328 and H329. D362 and H421 together coordinate Zn(2+). The interval 441–807 (MNNIFDANLL…VNEQPKEIAN (367 aa)) is histidinol-phosphate aminotransferase. K655 is modified (N6-(pyridoxal phosphate)lysine).

In the N-terminal section; belongs to the histidinol dehydrogenase family. It in the C-terminal section; belongs to the class-II pyridoxal-phosphate-dependent aminotransferase family. Histidinol-phosphate aminotransferase subfamily. As to quaternary structure, homodimer. It depends on Zn(2+) as a cofactor. Requires pyridoxal 5'-phosphate as cofactor.

The catalysed reaction is L-histidinol phosphate + 2-oxoglutarate = 3-(imidazol-4-yl)-2-oxopropyl phosphate + L-glutamate. It catalyses the reaction L-histidinol + 2 NAD(+) + H2O = L-histidine + 2 NADH + 3 H(+). Its pathway is amino-acid biosynthesis; L-histidine biosynthesis; L-histidine from 5-phospho-alpha-D-ribose 1-diphosphate: step 7/9. The protein operates within amino-acid biosynthesis; L-histidine biosynthesis; L-histidine from 5-phospho-alpha-D-ribose 1-diphosphate: step 9/9. Catalyzes the sequential NAD-dependent oxidations of L-histidinol to L-histidinaldehyde and then to L-histidine. The polypeptide is Putative histidine biosynthesis bifunctional protein HisCD (hisCD) (Photorhabdus laumondii subsp. laumondii (strain DSM 15139 / CIP 105565 / TT01) (Photorhabdus luminescens subsp. laumondii)).